The primary structure comprises 118 residues: Urease subunit beta (118 aa).

This sequence belongs to the urease beta subunit family. In terms of assembly, heterotrimer of UreA (gamma), UreB (beta) and UreC (alpha) subunits. Three heterotrimers associate to form the active enzyme.

It localises to the cytoplasm. The enzyme catalyses urea + 2 H2O + H(+) = hydrogencarbonate + 2 NH4(+). It functions in the pathway nitrogen metabolism; urea degradation; CO(2) and NH(3) from urea (urease route): step 1/1. The protein is Urease subunit beta of Aliivibrio fischeri (strain ATCC 700601 / ES114) (Vibrio fischeri).